The following is an 864-amino-acid chain: NT-3 growth factor receptor (864 aa).

Residues 1–31 (MDVSLCPAKCSFWRIFLLGSVWLDYVGSVLA) form the signal peptide. 2 cysteine pairs are disulfide-bonded: cysteine 32-cysteine 38 and cysteine 36-cysteine 45. The Extracellular portion of the chain corresponds to 32 to 429 (CPANCVCSKT…TVTHKPEEDT (398 aa)). 3 N-linked (GlcNAc...) asparagine glycosylation sites follow: asparagine 68, asparagine 72, and asparagine 79. 2 LRR repeats span residues 104-125 (GLQK…AFAK) and 128-149 (HLRY…LFQT). Residues asparagine 133 and asparagine 163 are each glycosylated (N-linked (GlcNAc...) asparagine). Positions 160–209 (NFFNCSCDIRWMQLWQEQGEARLDSQSLYCISADGSQLPLFRMNISQCDL) constitute an LRRCT domain. Intrachain disulfides connect cysteine 164–cysteine 189 and cysteine 166–cysteine 207. N-linked (GlcNAc...) asparagine glycosylation is found at asparagine 203, asparagine 218, asparagine 232, asparagine 259, asparagine 267, asparagine 272, and asparagine 294. Ig-like C2-type domains lie at 210-300 (PEIS…VALT) and 309-382 (SLVE…IAKN). A disulfide bridge links cysteine 231 with cysteine 284. Cysteine 320 and cysteine 362 are disulfide-bonded. 2 N-linked (GlcNAc...) asparagine glycosylation sites follow: asparagine 375 and asparagine 388. A helical membrane pass occupies residues 430–453 (FGVSIAVGLAAFACVLLVVLFIMI). Residues 454–864 (NKYGRRSKFG…ATPIYLDILG (411 aa)) are Cytoplasmic-facing. At serine 493 the chain carries Phosphoserine. At tyrosine 516 the chain carries Phosphotyrosine; by autocatalysis. The Protein kinase domain occupies 538 to 853 (IVLKRELGEG…EIYKILHALG (316 aa)). ATP contacts are provided by residues 544–552 (LGEGAFGKV) and lysine 572. Catalysis depends on aspartate 679, which acts as the Proton acceptor. Phosphotyrosine; by autocatalysis is present on residues tyrosine 705, tyrosine 709, tyrosine 710, and tyrosine 859.

Belongs to the protein kinase superfamily. Tyr protein kinase family. Insulin receptor subfamily. In terms of assembly, exists in a dynamic equilibrium between monomeric (low affinity) and dimeric (high affinity) structures. Binds SH2B2. Interacts with SQSTM1 and KIDINS220. Interacts with PTPRS. Interacts with MAPK8IP3/JIP3. In terms of processing, ligand-mediated auto-phosphorylation. In terms of tissue distribution, widely expressed, mainly in the nervous tissue.

The protein localises to the membrane. The catalysed reaction is L-tyrosyl-[protein] + ATP = O-phospho-L-tyrosyl-[protein] + ADP + H(+). Functionally, receptor tyrosine kinase involved in nervous system and probably heart development. Upon binding of its ligand NTF3/neurotrophin-3, NTRK3 autophosphorylates and activates different signaling pathways, including the phosphatidylinositol 3-kinase/AKT and the MAPK pathways, that control cell survival and differentiation. NTRK3 isoforms containing insertions within the kinase domain can autophosphorylate in response to NTF3/neurotrophin-3, but cannot mediate downstream phenotypic responses. In Rattus norvegicus (Rat), this protein is NT-3 growth factor receptor (Ntrk3).